The primary structure comprises 262 residues: Large ribosomal subunit protein uL10m (262 aa).

The N-terminal 28 residues, 1-28, are a transit peptide targeting the mitochondrion; sequence MAAAVAGILRGGLPPRAAWLPTLQTVRH. Residues 243-262 are disordered; that stretch reads GDCATSANEKLHPPDPAPDA.

This sequence belongs to the universal ribosomal protein uL10 family. Component of the mitochondrial ribosome large subunit (39S) which comprises a 16S rRNA and about 50 distinct proteins.

It localises to the mitochondrion. The chain is Large ribosomal subunit protein uL10m (Mrpl10) from Mus musculus (Mouse).